The chain runs to 246 residues: 3-oxoacyl-[acyl-carrier-protein] reductase FabG (246 aa).

Residues 11 to 14, 62 to 63, and asparagine 89 contribute to the NADP(+) site; these read GASR and NV. Position 141 (serine 141) interacts with substrate. The active-site Proton acceptor is tyrosine 154. Residues 154-158 and isoleucine 187 contribute to the NADP(+) site; that span reads YVATK.

The protein belongs to the short-chain dehydrogenases/reductases (SDR) family. Homotetramer.

It carries out the reaction a (3R)-hydroxyacyl-[ACP] + NADP(+) = a 3-oxoacyl-[ACP] + NADPH + H(+). It participates in lipid metabolism; fatty acid biosynthesis. In terms of biological role, catalyzes the NADPH-dependent reduction of beta-ketoacyl-ACP substrates to beta-hydroxyacyl-ACP products, the first reductive step in the elongation cycle of fatty acid biosynthesis. The protein is 3-oxoacyl-[acyl-carrier-protein] reductase FabG (fabG) of Staphylococcus aureus (strain Mu50 / ATCC 700699).